Consider the following 274-residue polypeptide: Dermonecrotic toxin LspiSicTox-betaIII2 (274 aa).

H5 is a catalytic residue. 2 residues coordinate Mg(2+): E25 and D27. Catalysis depends on H41, which acts as the Nucleophile. Cystine bridges form between C45–C51 and C47–C189. D85 serves as a coordination point for Mg(2+).

This sequence belongs to the arthropod phospholipase D family. Class II subfamily. Mg(2+) serves as cofactor. Expressed by the venom gland.

The protein resides in the secreted. The enzyme catalyses an N-(acyl)-sphingosylphosphocholine = an N-(acyl)-sphingosyl-1,3-cyclic phosphate + choline. The catalysed reaction is an N-(acyl)-sphingosylphosphoethanolamine = an N-(acyl)-sphingosyl-1,3-cyclic phosphate + ethanolamine. It catalyses the reaction a 1-acyl-sn-glycero-3-phosphocholine = a 1-acyl-sn-glycero-2,3-cyclic phosphate + choline. It carries out the reaction a 1-acyl-sn-glycero-3-phosphoethanolamine = a 1-acyl-sn-glycero-2,3-cyclic phosphate + ethanolamine. Its function is as follows. Dermonecrotic toxins cleave the phosphodiester linkage between the phosphate and headgroup of certain phospholipids (sphingolipid and lysolipid substrates), forming an alcohol (often choline) and a cyclic phosphate. This toxin acts on sphingomyelin (SM). It may also act on ceramide phosphoethanolamine (CPE), lysophosphatidylcholine (LPC) and lysophosphatidylethanolamine (LPE), but not on lysophosphatidylserine (LPS), and lysophosphatidylglycerol (LPG). It acts by transphosphatidylation, releasing exclusively cyclic phosphate products as second products. Induces dermonecrosis, hemolysis, increased vascular permeability, edema, inflammatory response, and platelet aggregation. The polypeptide is Dermonecrotic toxin LspiSicTox-betaIII2 (Loxosceles spinulosa (Recluse spider)).